Here is a 144-residue protein sequence, read N- to C-terminus: Large ribosomal subunit protein uL15 (144 aa).

The tract at residues Met1–Gln54 is disordered. Composition is skewed to gly residues over residues Arg21–Ala31 and Ser42–Gly52.

This sequence belongs to the universal ribosomal protein uL15 family. In terms of assembly, part of the 50S ribosomal subunit.

Its function is as follows. Binds to the 23S rRNA. The polypeptide is Large ribosomal subunit protein uL15 (Shewanella oneidensis (strain ATCC 700550 / JCM 31522 / CIP 106686 / LMG 19005 / NCIMB 14063 / MR-1)).